A 629-amino-acid polypeptide reads, in one-letter code: tRNA uridine 5-carboxymethylaminomethyl modification enzyme MnmG (629 aa).

FAD contacts are provided by residues 13–18 (GGGHAG), V125, and S180. Position 273–287 (273–287 (GPRYCPSIEDKVMRF)) interacts with NAD(+). Q370 contributes to the FAD binding site.

Belongs to the MnmG family. In terms of assembly, homodimer. Heterotetramer of two MnmE and two MnmG subunits. FAD serves as cofactor.

Its subcellular location is the cytoplasm. NAD-binding protein involved in the addition of a carboxymethylaminomethyl (cmnm) group at the wobble position (U34) of certain tRNAs, forming tRNA-cmnm(5)s(2)U34. The protein is tRNA uridine 5-carboxymethylaminomethyl modification enzyme MnmG of Shigella sonnei (strain Ss046).